Consider the following 356-residue polypeptide: 5-formaminoimidazole-4-carboxamide-1-(beta)-D-ribofuranosyl 5'-monophosphate synthetase 1 (356 aa).

5-amino-1-(5-phospho-beta-D-ribosyl)imidazole-4-carboxamide is bound by residues H27 and S94. The ATP-grasp domain maps to 101 to 333 (TENFAEMAVP…YADLIQEDLS (233 aa)). ATP contacts are provided by residues 145 to 196 (PRDI…TRYY) and E226. N255 is a binding site for 5-amino-1-(5-phospho-beta-D-ribosyl)imidazole-4-carboxamide. E293 and E306 together coordinate Mg(2+).

It belongs to the phosphohexose mutase family. It depends on Mg(2+) as a cofactor. Requires Mn(2+) as cofactor.

The enzyme catalyses 5-amino-1-(5-phospho-beta-D-ribosyl)imidazole-4-carboxamide + formate + ATP = 5-formamido-1-(5-phospho-D-ribosyl)imidazole-4-carboxamide + ADP + phosphate. It functions in the pathway purine metabolism; IMP biosynthesis via de novo pathway; 5-formamido-1-(5-phospho-D-ribosyl)imidazole-4-carboxamide from 5-amino-1-(5-phospho-D-ribosyl)imidazole-4-carboxamide (formate route): step 1/1. In terms of biological role, catalyzes the ATP- and formate-dependent formylation of 5-aminoimidazole-4-carboxamide-1-beta-d-ribofuranosyl 5'-monophosphate (AICAR) to 5-formaminoimidazole-4-carboxamide-1-beta-d-ribofuranosyl 5'-monophosphate (FAICAR) in the absence of folates. The sequence is that of 5-formaminoimidazole-4-carboxamide-1-(beta)-D-ribofuranosyl 5'-monophosphate synthetase 1 from Methanosarcina mazei (strain ATCC BAA-159 / DSM 3647 / Goe1 / Go1 / JCM 11833 / OCM 88) (Methanosarcina frisia).